The following is a 346-amino-acid chain: DNA primase small subunit PriS (346 aa).

Residues Asp-97, Asp-99, and Asp-278 contribute to the active site.

It belongs to the eukaryotic-type primase small subunit family. As to quaternary structure, heterodimer of a small subunit (PriS) and a large subunit (PriL). It depends on Mg(2+) as a cofactor. Mn(2+) serves as cofactor.

Functionally, catalytic subunit of DNA primase, an RNA polymerase that catalyzes the synthesis of short RNA molecules used as primers for DNA polymerase during DNA replication. The small subunit contains the primase catalytic core and has DNA synthesis activity on its own. Binding to the large subunit stabilizes and modulates the activity, increasing the rate of DNA synthesis while decreasing the length of the DNA fragments, and conferring RNA synthesis capability. The DNA polymerase activity may enable DNA primase to also catalyze primer extension after primer synthesis. May also play a role in DNA repair. The chain is DNA primase small subunit PriS from Thermococcus onnurineus (strain NA1).